The chain runs to 358 residues: Phosphoribosylformylglycinamidine cyclo-ligase (358 aa).

It belongs to the AIR synthase family.

Its subcellular location is the cytoplasm. The catalysed reaction is 2-formamido-N(1)-(5-O-phospho-beta-D-ribosyl)acetamidine + ATP = 5-amino-1-(5-phospho-beta-D-ribosyl)imidazole + ADP + phosphate + H(+). Its pathway is purine metabolism; IMP biosynthesis via de novo pathway; 5-amino-1-(5-phospho-D-ribosyl)imidazole from N(2)-formyl-N(1)-(5-phospho-D-ribosyl)glycinamide: step 2/2. This is Phosphoribosylformylglycinamidine cyclo-ligase from Chromohalobacter salexigens (strain ATCC BAA-138 / DSM 3043 / CIP 106854 / NCIMB 13768 / 1H11).